The following is a 524-amino-acid chain: Na(+)/H(+) antiporter NhaB (524 aa).

9 helical membrane passes run 13 to 33, 98 to 118, 140 to 160, 239 to 259, 304 to 324, 325 to 345, 358 to 378, 448 to 468, and 479 to 499; these read FLGN…IINP, LLLV…LFVF, AFLS…SVSV, FFIR…LVCL, AIIG…VGLV, GLSV…HSLG, LTVF…TPII, ATPN…APLI, and ALPY…FLLV.

The protein belongs to the NhaB Na(+)/H(+) (TC 2.A.34) antiporter family.

The protein localises to the cell inner membrane. The enzyme catalyses 2 Na(+)(in) + 3 H(+)(out) = 2 Na(+)(out) + 3 H(+)(in). Its function is as follows. Na(+)/H(+) antiporter that extrudes sodium in exchange for external protons. The sequence is that of Na(+)/H(+) antiporter NhaB from Yersinia pestis (strain Pestoides F).